Consider the following 360-residue polypeptide: UDP-3-O-acylglucosamine N-acyltransferase (360 aa).

His256 (proton acceptor) is an active-site residue. A disordered region spans residues 341–360 (EGSGAETAARPDDDRDEGRG). Residues 349 to 360 (ARPDDDRDEGRG) show a composition bias toward basic and acidic residues.

This sequence belongs to the transferase hexapeptide repeat family. LpxD subfamily. Homotrimer.

The catalysed reaction is a UDP-3-O-[(3R)-3-hydroxyacyl]-alpha-D-glucosamine + a (3R)-hydroxyacyl-[ACP] = a UDP-2-N,3-O-bis[(3R)-3-hydroxyacyl]-alpha-D-glucosamine + holo-[ACP] + H(+). The protein operates within bacterial outer membrane biogenesis; LPS lipid A biosynthesis. Catalyzes the N-acylation of UDP-3-O-acylglucosamine using 3-hydroxyacyl-ACP as the acyl donor. Is involved in the biosynthesis of lipid A, a phosphorylated glycolipid that anchors the lipopolysaccharide to the outer membrane of the cell. The chain is UDP-3-O-acylglucosamine N-acyltransferase from Rhodopseudomonas palustris (strain ATCC BAA-98 / CGA009).